We begin with the raw amino-acid sequence, 470 residues long: Sugar transporter ESL1 (470 aa).

The Essential for the localization to the vacuole membrane motif lies at leucine 10–leucine 16. 12 helical membrane-spanning segments follow: residues isoleucine 28–cysteine 48, valine 68–phenylalanine 88, lysine 99–alanine 119, leucine 130–isoleucine 150, glycine 157–isoleucine 177, leucine 186–glutamate 206, valine 268–tyrosine 288, isoleucine 303–valine 323, leucine 332–phenylalanine 352, isoleucine 368–isoleucine 388, leucine 404–leucine 424, and glycine 430–valine 450.

Belongs to the major facilitator superfamily. Sugar transporter (TC 2.A.1.1) family. As to expression, expressed in both shoots and roots. In roots, strongly expressed in pericycle and xylem parenchyma cells, and to a lesser extent in the root endodermis. In flowers, expressed in sepals.

The protein localises to the vacuole membrane. The protein resides in the vesicle. Sugar transporter. Transports monosaccharides across the vacuolar membrane independently from a proton gradient. May function coordinately with the vacuolar invertase to regulate osmotic pressure by affecting the accumulation of sugar in the cells under abiotic stress conditions. The chain is Sugar transporter ESL1 from Arabidopsis thaliana (Mouse-ear cress).